A 644-amino-acid chain; its full sequence is MNVTKLNLNAPSQGDPKELQTHFIVNKNKSQYVKFPSLQDRNAVDSFHEFLCKYNVWKTTDRVILTEKSFKYEPSSCFSDISFMITFYDIFCRAKEESIKKQKEQINIVKPNNYPTGFQHVHVSQQIQHDQHPQYNKHPQNNHHPQNTQHSQNNPIDKNINESENKEDLSDRSSDSANSEESHNSQYSQDSGDSRNYQDSEDNKGNIPTGKKTEQNKLIVQRLTNPKITPDTINDSNKDSNKDLNKDLSKNQSGESIKDKSKGPSKNLSKDSSKNKSKETSGSNLPDKISEDGDDLDDLGNDIDNFMDSSDYEDSDQDAISENPSDFDEDDSDDDDSNTEILEQILEISDNEHMELSSDLLEELNKKSPSNSKKSKTNQKLSQSSKKISSKTITNSGSKSQKQEPSTFSVKLKGKVSNGKTNKKTGKNIEESDWENSQSDSDHSESSDDSDNESDNESDNESNNDSDNETDSEIDDDKNNATPNIKLIKKSKKLSPKTPMKPNNKTTSVSKPVSKPPVKSSIKNNTKNNKPVPKPIKNPKKLSKQKDQSESQSDKDIDTDSENLPVSKKPPTNKSQVPKRPVGRPPKSVSLPSSPKKPKRNIGGSKTAKTQNKSKSQPKTNGSKTSTKSIPGSKAVGKKKPTKK.

A disordered region spans residues 123–644 (VSQQIQHDQH…AVGKKKPTKK (522 aa)). A compositionally biased stretch (low complexity) spans 133 to 155 (PQYNKHPQNNHHPQNTQHSQNNP). Residues 159–174 (NINESENKEDLSDRSS) show a composition bias toward basic and acidic residues. The segment covering 175–191 (DSANSEESHNSQYSQDS) has biased composition (polar residues). The segment covering 192–204 (GDSRNYQDSEDNK) has biased composition (basic and acidic residues). Polar residues predominate over residues 216–233 (NKLIVQRLTNPKITPDTI). Basic and acidic residues-rich tracts occupy residues 236-249 (SNKD…KDLS) and 256-279 (SIKD…KSKE). Acidic residues-rich tracts occupy residues 292-301 (DGDDLDDLGN) and 310-338 (SDYE…DDSN). Positions 367 to 400 (KSPSNSKKSKTNQKLSQSSKKISSKTITNSGSKS) are enriched in low complexity. A compositionally biased stretch (acidic residues) spans 447–476 (SDDSDNESDNESDNESNNDSDNETDSEIDD). Positions 496–531 (PKTPMKPNNKTTSVSKPVSKPPVKSSIKNNTKNNKP) are enriched in low complexity. Basic and acidic residues predominate over residues 544-558 (KQKDQSESQSDKDID). Over residues 585–594 (PPKSVSLPSS) the composition is skewed to low complexity. Over residues 607-630 (TAKTQNKSKSQPKTNGSKTSTKSI) the composition is skewed to polar residues.

This is an uncharacterized protein from Acanthamoeba polyphaga mimivirus (APMV).